A 294-amino-acid chain; its full sequence is ADP-ribosyl-[dinitrogen reductase] glycohydrolase (294 aa).

Residues 100–102 (NTC), E121, H158, and Y212 contribute to the ADP-D-ribose site. Mn(2+)-binding residues include D243, D245, and T246.

Belongs to the ADP-ribosylglycohydrolase family. As to quaternary structure, monomer. Mn(2+) serves as cofactor.

Its subcellular location is the cytoplasm. It catalyses the reaction N(omega)-alpha-(ADP-D-ribosyl)-L-arginyl-[dinitrogen reductase] + H2O = L-arginyl-[dinitrogen reductase] + ADP-D-ribose. Its function is as follows. Involved in the regulation of nitrogen fixation activity by the reversible ADP-ribosylation of one subunit of the homodimeric dinitrogenase reductase component of the nitrogenase enzyme complex. The ADP-ribosyltransferase (DraT) transfers the ADP-ribose group from NAD to dinitrogenase reductase. The ADP-ribose group is removed through the action of the ADP-ribosylglycohydrolase (DraG, this entry). This is ADP-ribosyl-[dinitrogen reductase] glycohydrolase from Rhodospirillum rubrum.